A 637-amino-acid chain; its full sequence is Threonine--tRNA ligase (637 aa).

The region spanning 1–61 (MITITLPDSS…ATDAAVRLIT (61 aa)) is the TGS domain. The interval 238–528 (DHRKLGAELD…LIEHFAGKFP (291 aa)) is catalytic. Cysteine 329, histidine 380, and histidine 505 together coordinate Zn(2+).

It belongs to the class-II aminoacyl-tRNA synthetase family. As to quaternary structure, homodimer. The cofactor is Zn(2+).

The protein resides in the cytoplasm. It catalyses the reaction tRNA(Thr) + L-threonine + ATP = L-threonyl-tRNA(Thr) + AMP + diphosphate + H(+). Catalyzes the attachment of threonine to tRNA(Thr) in a two-step reaction: L-threonine is first activated by ATP to form Thr-AMP and then transferred to the acceptor end of tRNA(Thr). Also edits incorrectly charged L-seryl-tRNA(Thr). This chain is Threonine--tRNA ligase, found in Desulfosudis oleivorans (strain DSM 6200 / JCM 39069 / Hxd3) (Desulfococcus oleovorans).